We begin with the raw amino-acid sequence, 502 residues long: Cytochrome P450 71B17 (502 aa).

Residues 1-21 (MAISLLCLFLITFVSLTIVGC) form a helical membrane-spanning segment. Cys-444 provides a ligand contact to heme.

It belongs to the cytochrome P450 family. It depends on heme as a cofactor.

The protein resides in the membrane. The polypeptide is Cytochrome P450 71B17 (CYP71B17) (Arabidopsis thaliana (Mouse-ear cress)).